A 334-amino-acid polypeptide reads, in one-letter code: Nucleoid-associated protein YPK_2796 (334 aa).

Belongs to the YejK family.

The protein localises to the cytoplasm. It localises to the nucleoid. The sequence is that of Nucleoid-associated protein YPK_2796 from Yersinia pseudotuberculosis serotype O:3 (strain YPIII).